A 255-amino-acid chain; its full sequence is Imidazole glycerol phosphate synthase subunit HisF (255 aa).

Active-site residues include aspartate 11 and aspartate 130.

This sequence belongs to the HisA/HisF family. As to quaternary structure, heterodimer of HisH and HisF.

It is found in the cytoplasm. The catalysed reaction is 5-[(5-phospho-1-deoxy-D-ribulos-1-ylimino)methylamino]-1-(5-phospho-beta-D-ribosyl)imidazole-4-carboxamide + L-glutamine = D-erythro-1-(imidazol-4-yl)glycerol 3-phosphate + 5-amino-1-(5-phospho-beta-D-ribosyl)imidazole-4-carboxamide + L-glutamate + H(+). It functions in the pathway amino-acid biosynthesis; L-histidine biosynthesis; L-histidine from 5-phospho-alpha-D-ribose 1-diphosphate: step 5/9. In terms of biological role, IGPS catalyzes the conversion of PRFAR and glutamine to IGP, AICAR and glutamate. The HisF subunit catalyzes the cyclization activity that produces IGP and AICAR from PRFAR using the ammonia provided by the HisH subunit. The sequence is that of Imidazole glycerol phosphate synthase subunit HisF from Syntrophotalea carbinolica (strain DSM 2380 / NBRC 103641 / GraBd1) (Pelobacter carbinolicus).